The following is a 325-amino-acid chain: uncharacterized protein (325 aa).

Catalysis depends on Tyr59, which acts as the Proton donor. His117 is a substrate binding site.

Belongs to the aldo/keto reductase family.

The protein localises to the cytoplasm. Its subcellular location is the nucleus. This is an uncharacterized protein from Schizosaccharomyces pombe (strain 972 / ATCC 24843) (Fission yeast).